A 1218-amino-acid chain; its full sequence is NACHT, LRR and PYD domains-containing protein 1a allele 4 (1218 aa).

Polar residues predominate over residues 1–29; it reads MGESQSKQESNTRVAQHGSQQDVDPTFQT. 2 disordered regions span residues 1–44 and 71–91; these read MGES…QVEQ and EMDHESRRHSHQSKKKLDRSE. Residues 77-87 show a composition bias toward basic residues; sequence RRHSHQSKKKL. The region spanning 175–484 is the NACHT domain; that stretch reads QLVIIEGAAG…EFFAAMSYIL (310 aa). Position 181–188 (181–188) interacts with ATP; sequence GAAGIGKS. 3 LRR repeats span residues 343 to 364, 673 to 693, and 730 to 750; these read KERNTIIDFNLIGSIPVLLTLC, NLEELDLSGNPLSYSAVRSLC, and RLAELDLRLNDLGDNGVRQLC. Residues 799–815 show a composition bias toward polar residues; the sequence is TMPTENTDGEESLTSSK. The segment at 799–842 is disordered; that stretch reads TMPTENTDGEESLTSSKQQQQQSGDKHMEPLGTDDDFWGPSGPV. Residues 835–968 are ZU5; sequence FWGPSGPVST…HFAVLENPSF (134 aa). One can recognise an FIIND domain in the interval 835 to 1118; it reads FWGPSGPVST…LRPALPRMAS (284 aa). A UPA region spans residues 969 to 1118; it reads SPMGVLLRMI…LRPALPRMAS (150 aa). Residues 1122-1211 enclose the CARD domain; the sequence is DAPALLHFVD…HLIMDLLEKS (90 aa).

The protein belongs to the NLRP family. In terms of assembly, interacts (via LRR repeats) with BCL2 and BCL2L1 (via the loop between motifs BH4 and BH3). Interacts with NOD2; this interaction is enhanced in the presence of muramyl dipeptide (MDP) and increases IL1B release. Interacts with EIF2AK2/PKR; this interaction requires EIF2AK2 activity, is accompanied by EIF2AK2 autophosphorylation and promotes inflammasome assembly in response to danger-associated signals. Interacts with MEFV; this interaction targets Nlrp1a to degradation by autophagy, hence preventing excessive IL1B- and IL18-mediated inflammation. Interacts with DPP9; leading to inhibit activation of the inflammasome. DPP9 acts via formation of a ternary complex, composed of a DPP9 homodimer, one full-length NLRP1 protein, and one cleaved C-terminus of Nlrp1a (NACHT, LRR and PYD domains-containing protein 1a, C-terminus). Interacts with DPP8; leading to inhibit activation of the inflammasome, probably via formation of a ternary complex with DPP8. As to quaternary structure, interacts with the C-terminal part of Nlrp1a (NACHT, LRR and PYD domains-containing protein 1a, C-terminus) in absence of pathogens and other damage-associated signals. Interacts with the N-terminal part of Nlrp1a (NACHT, LRR and PYD domains-containing protein 1a, N-terminus) in absence of pathogens and other damage-associated signals. Homomultimer; forms the Nlrp1a inflammasome polymeric complex, a filament composed of homopolymers of this form in response to pathogens and other damage-associated signals. The Nlrp1a inflammasome polymeric complex directly recruits pro-caspase-1 (proCASP1) independently of PYCARD/ASC. Interacts (via CARD domain) with CASP1 (via CARD domain); leading to CASP1 activation. Post-translationally, autocatalytically cleaved. Autocatalytic cleavage in FIIND region occurs constitutively, prior to activation signals, and is required for inflammasome activity (IL1B release), possibly by facilitating CASP1 binding. Both N- and C-terminal parts remain associated non-covalently. Ubiquitinated in response to pathogen-associated signals, leading to its degradation by the proteasome and subsequent release of the cleaved C-terminal part of the protein (NACHT, LRR and PYD domains-containing protein 1a, C-terminus), which polymerizes and forms the Nlrp1a inflammasome.

The protein resides in the cytoplasm. Its subcellular location is the cytosol. It localises to the nucleus. It is found in the inflammasome. Its activity is regulated as follows. Activated by pathogens and other damage-associated signals: activation promotes ubiquitination and degradation of the N-terminal part, releasing the cleaved C-terminal part of the protein (NACHT, LRR and PYD domains-containing protein 1a, C-terminus), which polymerizes and forms the Nlrp1a inflammasome. Nlrp1a inflammasome is inhibited by DPP8 and DPP9, which sequester the C-terminal fragment of Nlrp1a (NACHT, LRR and PYD domains-containing protein 1a, C-terminus) in a ternary complex, thereby preventing Nlrp1a oligomerization and activation. Nlrp1a inflammasome is strongly activated by Val-boroPro (Talabostat, PT-100), an inhibitor of dipeptidyl peptidases DPP8 and DPP9. Val-boroPro relieves inhibition of DPP8 and/or DPP9 by promoting disruption of the ternary complex, releasing its C-terminal part from autoinhibition. Not activated by cleavage by B.anthracis lethal toxin (LT) endopeptidase. Functionally, acts as the sensor component of the Nlrp1a inflammasome, which mediates inflammasome activation in response to various pathogen-associated signals, leading to subsequent pyroptosis. Inflammasomes are supramolecular complexes that assemble in the cytosol in response to pathogens and other damage-associated signals and play critical roles in innate immunity and inflammation. Acts as a recognition receptor (PRR): recognizes specific pathogens and other damage-associated signals, such as Val-boroPro inhibitor, and mediates the formation of the inflammasome polymeric complex. In response to pathogen-associated signals, the N-terminal part of Nlrp1a is degraded by the proteasome, releasing the cleaved C-terminal part of the protein (NACHT, LRR and PYD domains-containing protein 1a, C-terminus), which polymerizes to initiate the formation of the inflammasome complex: the inflammasome directly recruits pro-caspase-1 (proCASP1) independently of PYCARD/ASC and promotes caspase-1 (CASP1) activation, which subsequently cleaves and activates inflammatory cytokines IL1B and IL18 and gasdermin-D (GSDMD), leading to pyroptosis. In the absence of GSDMD expression, the Nlrp1a inflammasome is able to recruit and activate CASP8, leading to activation of gasdermin-E (GSDME). Constitutes the precursor of the Nlrp1a inflammasome, which mediates autoproteolytic processing within the FIIND domain to generate the N-terminal and C-terminal parts, which are associated non-covalently in absence of pathogens and other damage-associated signals. In terms of biological role, regulatory part that prevents formation of the Nlrp1a inflammasome: in absence of pathogens and other damage-associated signals, interacts with the C-terminal part of Nlrp1a (NACHT, LRR and PYD domains-containing protein 1a, C-terminus), preventing activation of the Nlrp1a inflammasome. In response to pathogen-associated signals, this part is ubiquitinated by the N-end rule pathway and degraded by the proteasome, releasing the cleaved C-terminal part of the protein, which polymerizes and forms the Nlrp1a inflammasome. Its function is as follows. Constitutes the active part of the Nlrp1a inflammasome. In absence of pathogens and other damage-associated signals, interacts with the N-terminal part of Nlrp1a (NACHT, LRR and PYD domains-containing protein 1a, N-terminus), preventing activation of the Nlrp1a inflammasome. In response to pathogen-associated signals, the N-terminal part of Nlrp1a is degraded by the proteasome, releasing this form, which polymerizes to form the Nlrp1a inflammasome complex: the Nlrp1a inflammasome complex then directly recruits pro-caspase-1 (proCASP1) and promotes caspase-1 (CASP1) activation, leading to gasdermin-D (GSDMD) cleavage and subsequent pyroptosis. This Rattus norvegicus (Rat) protein is NACHT, LRR and PYD domains-containing protein 1a allele 4.